A 72-amino-acid chain; its full sequence is Translation initiation factor IF-1 (72 aa).

Positions 1–72 (MSKEDHIEME…SKARITFRHR (72 aa)) constitute an S1-like domain.

It belongs to the IF-1 family. Component of the 30S ribosomal translation pre-initiation complex which assembles on the 30S ribosome in the order IF-2 and IF-3, IF-1 and N-formylmethionyl-tRNA(fMet); mRNA recruitment can occur at any time during PIC assembly.

The protein localises to the cytoplasm. One of the essential components for the initiation of protein synthesis. Stabilizes the binding of IF-2 and IF-3 on the 30S subunit to which N-formylmethionyl-tRNA(fMet) subsequently binds. Helps modulate mRNA selection, yielding the 30S pre-initiation complex (PIC). Upon addition of the 50S ribosomal subunit IF-1, IF-2 and IF-3 are released leaving the mature 70S translation initiation complex. This is Translation initiation factor IF-1 from Methylococcus capsulatus (strain ATCC 33009 / NCIMB 11132 / Bath).